The primary structure comprises 158 residues: Protein Smg homolog (158 aa).

Belongs to the Smg family.

This is Protein Smg homolog from Alteromonas mediterranea (strain DSM 17117 / CIP 110805 / LMG 28347 / Deep ecotype).